Consider the following 392-residue polypeptide: Integrin-linked kinase-associated serine/threonine phosphatase 2C (392 aa).

Position 1 is an N-acetylmethionine (Met-1). Positions 1–90 (MDLFGDLPEP…TSEEEKNGSE (90 aa)) are disordered. The residue at position 13 (Ser-13) is a Phosphoserine. The segment covering 56 to 70 (SGDSGSLATSISQMV) has biased composition (polar residues). Positions 72–90 (TEGKGAKRKTSEEEKNGSE) are enriched in basic and acidic residues. The PPM-type phosphatase domain maps to 108-390 (KGYVAERKGE…DNVTVMVVRI (283 aa)). Positions 152 and 153 each coordinate Mn(2+). An N6-acetyllysine modification is found at Lys-210. Asp-326 and Asp-381 together coordinate Mn(2+).

It belongs to the PP2C family. As to quaternary structure, interacts with ILK. Specific association with ILK is independent of the catalytic activity of either partner. Requires Mg(2+) as cofactor. Mn(2+) serves as cofactor. As to expression, widely expressed. Highest levels expressed in striated muscle. Much lower levels evident in various smooth muscle tissues.

It localises to the cytoplasm. It carries out the reaction O-phospho-L-seryl-[protein] + H2O = L-seryl-[protein] + phosphate. The catalysed reaction is O-phospho-L-threonyl-[protein] + H2O = L-threonyl-[protein] + phosphate. Its activity is regulated as follows. Inhibited rather than stimulated by magnesium. Protein phosphatase that may play a role in regulation of cell cycle progression via dephosphorylation of its substrates whose appropriate phosphorylation states might be crucial for cell proliferation. Selectively associates with integrin linked kinase (ILK), to modulate cell adhesion and growth factor signaling. Inhibits the ILK-GSK3B signaling axis and may play an important role in inhibiting oncogenic transformation. In Homo sapiens (Human), this protein is Integrin-linked kinase-associated serine/threonine phosphatase 2C (ILKAP).